The sequence spans 82 residues: Translational regulator CsrA (82 aa).

The protein belongs to the CsrA/RsmA family. Homodimer; the beta-strands of each monomer intercalate to form a hydrophobic core, while the alpha-helices form wings that extend away from the core.

It is found in the cytoplasm. In terms of biological role, a translational regulator that binds mRNA to regulate translation initiation and/or mRNA stability. Usually binds in the 5'-UTR at or near the Shine-Dalgarno sequence preventing ribosome-binding, thus repressing translation. Its main target seems to be the major flagellin gene, while its function is anatagonized by FliW. This Geobacillus kaustophilus (strain HTA426) protein is Translational regulator CsrA.